The following is a 478-amino-acid chain: 3-isopropylmalate dehydratase large subunit (478 aa).

3 residues coordinate [4Fe-4S] cluster: C355, C415, and C418.

Belongs to the aconitase/IPM isomerase family. LeuC type 1 subfamily. In terms of assembly, heterodimer of LeuC and LeuD. Requires [4Fe-4S] cluster as cofactor.

It catalyses the reaction (2R,3S)-3-isopropylmalate = (2S)-2-isopropylmalate. The protein operates within amino-acid biosynthesis; L-leucine biosynthesis; L-leucine from 3-methyl-2-oxobutanoate: step 2/4. In terms of biological role, catalyzes the isomerization between 2-isopropylmalate and 3-isopropylmalate, via the formation of 2-isopropylmaleate. This is 3-isopropylmalate dehydratase large subunit from Paracoccus denitrificans (strain Pd 1222).